A 149-amino-acid polypeptide reads, in one-letter code: Nucleoside diphosphate kinase (149 aa).

The ATP site is built by K9, F57, R85, T91, R102, and N112. Residue H115 is the Pros-phosphohistidine intermediate of the active site.

This sequence belongs to the NDK family. Homotetramer. Requires Mg(2+) as cofactor.

The protein localises to the cytoplasm. The catalysed reaction is a 2'-deoxyribonucleoside 5'-diphosphate + ATP = a 2'-deoxyribonucleoside 5'-triphosphate + ADP. It catalyses the reaction a ribonucleoside 5'-diphosphate + ATP = a ribonucleoside 5'-triphosphate + ADP. Major role in the synthesis of nucleoside triphosphates other than ATP. The ATP gamma phosphate is transferred to the NDP beta phosphate via a ping-pong mechanism, using a phosphorylated active-site intermediate. This Staphylococcus haemolyticus (strain JCSC1435) protein is Nucleoside diphosphate kinase.